A 78-amino-acid chain; its full sequence is MAQQRRGGRRRRKVDYIAANHIDYVDYKDVDLLKRFISERGKILPRRVTGTSAKNQRKVANAIKRARIMGLLPFVAED.

It belongs to the bacterial ribosomal protein bS18 family. In terms of assembly, part of the 30S ribosomal subunit. Forms a tight heterodimer with protein bS6.

In terms of biological role, binds as a heterodimer with protein bS6 to the central domain of the 16S rRNA, where it helps stabilize the platform of the 30S subunit. This is Small ribosomal subunit protein bS18 from Lactobacillus acidophilus (strain ATCC 700396 / NCK56 / N2 / NCFM).